A 416-amino-acid chain; its full sequence is Succinate--CoA ligase [ADP-forming] subunit beta (416 aa).

The N-terminal 14 residues, 1–14, are a transit peptide targeting the hydrogenosome; that stretch reads MLRMAPKTVGAVRN. Residues Lys-64, 71–73, and Glu-132 each bind ATP; that span reads GRG. The Mg(2+) site is built by Asn-224 and Asp-242. Residues Asn-293 and 350–352 each bind substrate; that span reads GIM.

The protein belongs to the succinate/malate CoA ligase beta subunit family. Heterodimer of an alpha and a beta subunit. It depends on Mg(2+) as a cofactor.

The protein localises to the hydrogenosome. It catalyses the reaction succinate + ATP + CoA = succinyl-CoA + ADP + phosphate. The protein operates within carbohydrate metabolism; tricarboxylic acid cycle; succinate from succinyl-CoA (ligase route): step 1/1. Its function is as follows. Succinyl-CoA synthetase functions in the citric acid cycle (TCA), coupling the hydrolysis of succinyl-CoA to the synthesis of ATP and thus represents the only step of substrate-level phosphorylation in the TCA. The beta subunit provides nucleotide specificity of the enzyme and binds the substrate succinate, while the binding sites for coenzyme A and phosphate are found in the alpha subunit. This is Succinate--CoA ligase [ADP-forming] subunit beta (SCSb) from Blastocystis sp. subtype 1 (strain ATCC 50177 / NandII).